Consider the following 328-residue polypeptide: 5,10-methylenetetrahydromethanopterin reductase (328 aa).

This sequence belongs to the mer family.

It is found in the cytoplasm. It catalyses the reaction 5-methyl-5,6,7,8-tetrahydromethanopterin + oxidized coenzyme F420-(gamma-L-Glu)(n) + H(+) = 5,10-methylenetetrahydromethanopterin + reduced coenzyme F420-(gamma-L-Glu)(n). Its pathway is one-carbon metabolism; methanogenesis from CO(2); methyl-coenzyme M from 5,10-methylene-5,6,7,8-tetrahydromethanopterin: step 1/2. In terms of biological role, catalyzes the reversible reduction of methylene-H(4)MPT to methyl-H(4)MPT. The protein is 5,10-methylenetetrahydromethanopterin reductase of Methanosarcina mazei (strain ATCC BAA-159 / DSM 3647 / Goe1 / Go1 / JCM 11833 / OCM 88) (Methanosarcina frisia).